The sequence spans 116 residues: Large ribosomal subunit protein bL17 (116 aa).

The protein belongs to the bacterial ribosomal protein bL17 family. In terms of assembly, part of the 50S ribosomal subunit. Contacts protein L32.

The sequence is that of Large ribosomal subunit protein bL17 from Synechococcus sp. (strain CC9311).